A 160-amino-acid polypeptide reads, in one-letter code: Large ribosomal subunit protein uL10 (160 aa).

This sequence belongs to the universal ribosomal protein uL10 family. In terms of assembly, part of the ribosomal stalk of the 50S ribosomal subunit. The N-terminus interacts with L11 and the large rRNA to form the base of the stalk. The C-terminus forms an elongated spine to which L12 dimers bind in a sequential fashion forming a multimeric L10(L12)X complex.

Functionally, forms part of the ribosomal stalk, playing a central role in the interaction of the ribosome with GTP-bound translation factors. In Wolinella succinogenes (strain ATCC 29543 / DSM 1740 / CCUG 13145 / JCM 31913 / LMG 7466 / NCTC 11488 / FDC 602W) (Vibrio succinogenes), this protein is Large ribosomal subunit protein uL10.